The chain runs to 252 residues: MMLRVSSSPAAAVANHLSGGAAATTAPARVTAQRSGVSLSAAAAAGKGKEVLSGVVFQPFEEIKGELALVPQSPDRSLARHKFVDDCEAAINEQINVEYNASYAYHSLFAYFDRDNVALKGFAKFFKESSDEEREHAEKLMEYQNKRGGRVRLQSIVAPLTEFDHPEKGDALYAMELTLALEKLVNEKLHSLHGVATRCNDPQLIDFIESEFLEEQGEAINKVSKYVAQLRRVGNKGHGVWHFDQMLLQEAA.

The transit peptide at 1 to 43 (MMLRVSSSPAAAVANHLSGGAAATTAPARVTAQRSGVSLSAAA) directs the protein to the chloroplast. Residues 44–80 (AAGKGKEVLSGVVFQPFEEIKGELALVPQSPDRSLAR) form an extension peptide (EP) region. A Ferritin-like diiron domain is found at 81-234 (HKFVDDCEAA…KYVAQLRRVG (154 aa)). Fe cation-binding residues include E98, E133, H136, E182, and Q216.

Belongs to the ferritin family. Oligomer of 24 subunits. There are two types of subunits: L (light) chain and H (heavy) chain. The major chain can be light or heavy, depending on the species and tissue type. The functional molecule forms a roughly spherical shell with a diameter of 12 nm and contains a central cavity into which the insoluble mineral iron core is deposited. As to expression, ferritins accumulate in seed during maturation. Then, they are degraded during the first days of germination. Present in roots and leaves after iron treatment.

Its subcellular location is the plastid. It localises to the chloroplast. It catalyses the reaction 4 Fe(2+) + O2 + 4 H(+) = 4 Fe(3+) + 2 H2O. Functionally, stores iron in a soluble, non-toxic, readily available form. Important for iron homeostasis. Has ferroxidase activity. Iron is taken up in the ferrous form and deposited as ferric hydroxides after oxidation. The protein is Ferritin-2, chloroplastic (FER2) of Zea mays (Maize).